Reading from the N-terminus, the 154-residue chain is 17 kDa surface antigen (154 aa).

Positions 1 to 19 (MKLLSKIMIIALAASMLQA) are cleaved as a signal peptide. The N-palmitoyl cysteine moiety is linked to residue cysteine 20. Cysteine 20 is lipidated: S-diacylglycerol cysteine.

The protein belongs to the rickettsiale 17 kDa surface antigen family.

The protein resides in the cell outer membrane. The chain is 17 kDa surface antigen (omp) from Rickettsia rhipicephali.